We begin with the raw amino-acid sequence, 638 residues long: Stress-activated protein kinase alpha (638 aa).

ANK repeat units follow at residues 43–72 (YGQS…TLKA), 80–109 (NGFS…NVDV), 113–146 (DLNT…NVNA), 150–181 (NGET…NVNL), 185–214 (FQES…DVDC), and 219–248 (ERKT…LFDW). The SAM domain maps to 240–303 (KKYKDLFDWL…LKETSNLANE (64 aa)). The Protein kinase domain occupies 351-620 (LEYTEKLGAG…RLVTIENEYR (270 aa)). Residues 357 to 365 (LGAGSSGKV) and Lys-378 contribute to the ATP site. Asp-472 acts as the Proton acceptor in catalysis.

This sequence belongs to the protein kinase superfamily. TKL Ser/Thr protein kinase family. As to quaternary structure, interacts with F-actin. In terms of processing, autophosphorylated.

The protein resides in the cytoplasm. It is found in the cytoskeleton. The enzyme catalyses L-seryl-[protein] + ATP = O-phospho-L-seryl-[protein] + ADP + H(+). The catalysed reaction is L-threonyl-[protein] + ATP = O-phospho-L-threonyl-[protein] + ADP + H(+). Its function is as follows. May be involved in cortical F-actin organization and resistance to osmotic stress. Activated upon cell detachment, in vitro. The sequence is that of Stress-activated protein kinase alpha (spkA-1) from Dictyostelium discoideum (Social amoeba).